The sequence spans 1036 residues: Serine/threonine-protein kinase ULK2 (1036 aa).

The 263-residue stretch at Tyr9–Leu271 folds into the Protein kinase domain. ATP contacts are provided by residues Val15–Val23 and Lys39. Residue Asp131 is the Proton acceptor of the active site. Disordered regions lie at residues Glu319–Cys348, Thr418–Ala460, Cys491–Ser522, Gln540–Trp588, and Ala656–Glu695. Positions Ser335 to Cys348 are enriched in low complexity. The span at Thr418–His428 shows a compositional bias: polar residues. Ser430 is modified (phosphoserine). Positions Arg504 to Leu521 are enriched in polar residues. Residues Gln659 to Lys679 show a composition bias toward polar residues. Residues Ser771 and Ser780 each carry the phosphoserine modification. The interval Glu812–Val1036 is CTD-like region.

This sequence belongs to the protein kinase superfamily. Ser/Thr protein kinase family. APG1/unc-51/ULK1 subfamily. Interacts with SYNGAP1. Component of a complex consisting of ATG13/KIAA0652, ULK1 and RB1CC1/FIP200. Interacts (via C-terminus) with ATG13/KIAA0652. Associates with the mammalian target of rapamycin complex 1 (mTORC1) through an interaction with RPTOR. Autophosphorylated. In response to nutrient limitation, probably phosphorylated and activated by AMPK, leading to activate autophagy.

Its subcellular location is the cytoplasmic vesicle membrane. It catalyses the reaction L-seryl-[protein] + ATP = O-phospho-L-seryl-[protein] + ADP + H(+). The catalysed reaction is L-threonyl-[protein] + ATP = O-phospho-L-threonyl-[protein] + ADP + H(+). Functionally, serine/threonine-protein kinase involved in autophagy in response to starvation. Acts upstream of phosphatidylinositol 3-kinase PIK3C3 to regulate the formation of autophagophores, the precursors of autophagosomes. Part of regulatory feedback loops in autophagy: acts both as a downstream effector and a negative regulator of mammalian target of rapamycin complex 1 (mTORC1) via interaction with RPTOR. Activated via phosphorylation by AMPK, also acts as a negative regulator of AMPK through phosphorylation of the AMPK subunits PRKAA1, PRKAB2 and PRKAG1. May phosphorylate ATG13/KIAA0652, FRS2, FRS3 and RPTOR; however such data need additional evidences. Not involved in ammonia-induced autophagy or in autophagic response of cerebellar granule neurons (CGN) to low potassium concentration. Plays a role early in neuronal differentiation and is required for granule cell axon formation: may govern axon formation via Ras-like GTPase signaling and through regulation of the Rab5-mediated endocytic pathways within developing axons. This chain is Serine/threonine-protein kinase ULK2 (ULK2), found in Homo sapiens (Human).